Consider the following 714-residue polypeptide: Polyribonucleotide nucleotidyltransferase (714 aa).

Mg(2+) contacts are provided by Asp487 and Asp493. The region spanning 554 to 613 is the KH domain; that stretch reads PRIETLKIPTDKIREVIGTGGKVIREIVEKTGAKINIEDDGTVKVASSDGNSIKAAIAWI. The S1 motif domain occupies 623–691; the sequence is GQIYEGTVVK…DRGKVRLSMR (69 aa).

The protein belongs to the polyribonucleotide nucleotidyltransferase family. Mg(2+) is required as a cofactor.

The protein localises to the cytoplasm. It carries out the reaction RNA(n+1) + phosphate = RNA(n) + a ribonucleoside 5'-diphosphate. Functionally, involved in mRNA degradation. Catalyzes the phosphorolysis of single-stranded polyribonucleotides processively in the 3'- to 5'-direction. In Methylocella silvestris (strain DSM 15510 / CIP 108128 / LMG 27833 / NCIMB 13906 / BL2), this protein is Polyribonucleotide nucleotidyltransferase.